The following is a 461-amino-acid chain: Aspartyl/glutamyl-tRNA(Asn/Gln) amidotransferase subunit B (461 aa).

The protein belongs to the GatB/GatE family. GatB subfamily. In terms of assembly, heterotrimer of A, B and C subunits.

The enzyme catalyses L-glutamyl-tRNA(Gln) + L-glutamine + ATP + H2O = L-glutaminyl-tRNA(Gln) + L-glutamate + ADP + phosphate + H(+). The catalysed reaction is L-aspartyl-tRNA(Asn) + L-glutamine + ATP + H2O = L-asparaginyl-tRNA(Asn) + L-glutamate + ADP + phosphate + 2 H(+). Functionally, allows the formation of correctly charged Asn-tRNA(Asn) or Gln-tRNA(Gln) through the transamidation of misacylated Asp-tRNA(Asn) or Glu-tRNA(Gln) in organisms which lack either or both of asparaginyl-tRNA or glutaminyl-tRNA synthetases. The reaction takes place in the presence of glutamine and ATP through an activated phospho-Asp-tRNA(Asn) or phospho-Glu-tRNA(Gln). The polypeptide is Aspartyl/glutamyl-tRNA(Asn/Gln) amidotransferase subunit B (Methanopyrus kandleri (strain AV19 / DSM 6324 / JCM 9639 / NBRC 100938)).